A 754-amino-acid chain; its full sequence is Gelsolin, cytoplasmic (754 aa).

The segment at 1–120 (MVPAFEGAGA…RYLKGGVASG (120 aa)) is actin-severing. A Gelsolin-like 1 repeat occupies 22-71 (FEVVPYPKEKYGQFYQGDSYIVLYTRDVNGNLSWDLHFWLGSETSQDEAG). The segment at 68 to 71 (DEAG) is actin-actin interfilament contact point. Residues 101-108 (LFLSRFKK) and 133-141 (RLFHVKGRR) contribute to the a 1,2-diacyl-sn-glycero-3-phospho-(1D-myo-inositol-4,5-bisphosphate) site. One copy of the Gelsolin-like 2 repeat lies at 143 to 183 (IRIRQVEVGVGSMNKGDCFILDCGSQVYAYMGPSSRKMDRL). The interval 209–238 (TASGSEAGESSPGLGGGSPDDVADEDTGVD) is disordered. Residues 210–220 (ASGSEAGESSP) are compositionally biased toward low complexity. Gelsolin-like repeat units follow at residues 266 to 306 (NMIG…KEKV), 414 to 463 (LKLE…DEKA), 538 to 580 (FDTR…EEKA), and 643 to 684 (LRVN…QEKE). The actin-binding, Ca-sensitive stretch occupies residues 386–751 (LLQKNAGPAF…MKAQVPETNA (366 aa)). Ca(2+) contacts are provided by G430, D431, E461, D556, E578, D659, D660, and E682.

The protein belongs to the villin/gelsolin family. As to expression, tail muscle.

The protein resides in the cytoplasm. It localises to the cytoskeleton. Functionally, calcium-regulated, actin-modulating protein that binds to the plus (or barbed) ends of actin monomers or filaments, preventing monomer exchange (end-blocking or capping). It can promote the assembly of monomers into filaments (nucleation) as well as sever filaments already formed. The sequence is that of Gelsolin, cytoplasmic from Homarus americanus (American lobster).